Consider the following 213-residue polypeptide: Imidazole glycerol phosphate synthase subunit HisH (213 aa).

The region spanning 1–212 (MLAILDYKAG…HRYCTEAADA (212 aa)) is the Glutamine amidotransferase type-1 domain. Cysteine 79 functions as the Nucleophile in the catalytic mechanism. Catalysis depends on residues histidine 187 and glutamate 189.

As to quaternary structure, heterodimer of HisH and HisF.

It localises to the cytoplasm. The catalysed reaction is 5-[(5-phospho-1-deoxy-D-ribulos-1-ylimino)methylamino]-1-(5-phospho-beta-D-ribosyl)imidazole-4-carboxamide + L-glutamine = D-erythro-1-(imidazol-4-yl)glycerol 3-phosphate + 5-amino-1-(5-phospho-beta-D-ribosyl)imidazole-4-carboxamide + L-glutamate + H(+). It catalyses the reaction L-glutamine + H2O = L-glutamate + NH4(+). It functions in the pathway amino-acid biosynthesis; L-histidine biosynthesis; L-histidine from 5-phospho-alpha-D-ribose 1-diphosphate: step 5/9. IGPS catalyzes the conversion of PRFAR and glutamine to IGP, AICAR and glutamate. The HisH subunit catalyzes the hydrolysis of glutamine to glutamate and ammonia as part of the synthesis of IGP and AICAR. The resulting ammonia molecule is channeled to the active site of HisF. This Nitratidesulfovibrio vulgaris (strain ATCC 29579 / DSM 644 / CCUG 34227 / NCIMB 8303 / VKM B-1760 / Hildenborough) (Desulfovibrio vulgaris) protein is Imidazole glycerol phosphate synthase subunit HisH.